Here is a 142-residue protein sequence, read N- to C-terminus: MKLSADDKHNVKAIWEHVKGHEEAIGAEALCRMFTSLPTTRTYFPTKDIKEGSSFLHSHGKKVMGALSNAVAHIDDIDGALSKLSDKHAEELMVDPANFPKLAHNILVVLGIHLKPHLTYSVHSSVDKFLATVGYVLASKYR.

The Globin domain maps to 2–142 (KLSADDKHNV…VGYVLASKYR (141 aa)). Histidine 59 lines the O2 pocket. Histidine 88 lines the heme b pocket.

Belongs to the globin family. Major hemoglobin is a heterotetramer of two alpha-1 chains and two beta-1 chains. In terms of tissue distribution, red blood cells.

Its function is as follows. Involved in oxygen transport from the lung to the various peripheral tissues. The sequence is that of Hemoglobin subunit alpha-1 from Triturus cristatus (Great crested newt).